We begin with the raw amino-acid sequence, 257 residues long: Pyridoxal phosphate homeostasis protein (257 aa).

Lysine 47 carries the post-translational modification N6-(pyridoxal phosphate)lysine.

Belongs to the pyridoxal phosphate-binding protein YggS/PROSC family.

Its function is as follows. Pyridoxal 5'-phosphate (PLP)-binding protein, which is involved in PLP homeostasis. In Mycobacterium leprae (strain TN), this protein is Pyridoxal phosphate homeostasis protein.